The sequence spans 835 residues: Protein translocase subunit SecA (835 aa).

ATP is bound by residues glutamine 85, 103–107 (GEGKT), and aspartate 492. The disordered stretch occupies residues 788 to 807 (VQGEAVHPSSDGEEAKKKPV). Positions 819, 821, 830, and 831 each coordinate Zn(2+).

It belongs to the SecA family. In terms of assembly, monomer and homodimer. Part of the essential Sec protein translocation apparatus which comprises SecA, SecYEG and auxiliary proteins SecDF. Other proteins may also be involved. It depends on Zn(2+) as a cofactor.

The protein localises to the cell membrane. It is found in the cytoplasm. The catalysed reaction is ATP + H2O + cellular proteinSide 1 = ADP + phosphate + cellular proteinSide 2.. Part of the Sec protein translocase complex. Interacts with the SecYEG preprotein conducting channel. Has a central role in coupling the hydrolysis of ATP to the transfer of proteins into and across the cell membrane, serving as an ATP-driven molecular motor driving the stepwise translocation of polypeptide chains across the membrane. In Bacillus cereus (strain ATCC 14579 / DSM 31 / CCUG 7414 / JCM 2152 / NBRC 15305 / NCIMB 9373 / NCTC 2599 / NRRL B-3711), this protein is Protein translocase subunit SecA.